The following is a 324-amino-acid chain: Lipid droplet-associated hydrolase (324 aa).

Ser136 acts as the Nucleophile in catalysis. Catalysis depends on charge relay system residues Asp270 and His299.

The protein belongs to the AB hydrolase superfamily. LDAH family.

It is found in the lipid droplet. It localises to the endoplasmic reticulum. It carries out the reaction a cholesterol ester + H2O = cholesterol + a fatty acid + H(+). Probable serine lipid hydrolase associated with lipid droplets. Has low cholesterol esterase activity. Appears to lack triglyceride lipase activity. Involved in cholesterol and triglyceride homeostasis; stimulates cellular triglyceride accumulation and cellular cholesterol release. The sequence is that of Lipid droplet-associated hydrolase from Gallus gallus (Chicken).